A 1942-amino-acid chain; its full sequence is Myosin-1 (1942 aa).

One can recognise a Myosin N-terminal SH3-like domain in the interval 33–82 (DAKSSVFVVDAKESFVKATVQSREGGKVTAKTEGGTTVTVKDDQVYPMNP). Serine 36 is subject to Phosphoserine. Phosphothreonine is present on residues threonine 64 and threonine 69. The 700-residue stretch at 86-785 (DKIEDMAMMT…LLGLLEEMRD (700 aa)) folds into the Myosin motor domain. Position 130 is an N6,N6,N6-trimethyllysine (lysine 130). ATP is bound at residue 179 to 186 (GESGAGKT). Residue tyrosine 389 is modified to Phosphotyrosine. Residue threonine 419 is modified to Phosphothreonine. Tyrosine 424 carries the post-translational modification Phosphotyrosine. Serine 625 is subject to Phosphoserine. Residues 662-684 (LNKLMTNLRSTHPHFVRCIIPNE) are actin-binding. Residue histidine 760 is modified to Pros-methylhistidine. The actin-binding stretch occupies residues 764 to 778 (KFGHTKVFFKAGLLG). Residues 788–817 (LAQLITRTQAMCRGYLARVEYQKMVERRES) form the IQ domain. A coiled-coil region spans residues 846–1942 (LLKSAETEKE…EVHTKIISEE (1097 aa)). Residues serine 1095, serine 1099, serine 1165, serine 1240, and serine 1246 each carry the phosphoserine modification. The tract at residues 1156-1175 (RLEEAGGATSAQIEMNKKRE) is disordered. At threonine 1258 the chain carries Phosphothreonine. Serine 1264 bears the Phosphoserine mark. 2 positions are modified to phosphothreonine: threonine 1268 and threonine 1289. Phosphoserine is present on residues serine 1291, serine 1295, serine 1306, and serine 1309. Tyrosine 1467 carries the phosphotyrosine modification. Phosphothreonine is present on threonine 1470. At serine 1477 the chain carries Phosphoserine. Tyrosine 1495 is modified (phosphotyrosine). A Phosphoserine modification is found at serine 1498. Position 1504 is a phosphothreonine (threonine 1504). Position 1517 is a phosphoserine (serine 1517). Threonine 1520 is subject to Phosphothreonine. Residues serine 1545, serine 1557, serine 1577, serine 1603, serine 1606, serine 1717, and serine 1729 each carry the phosphoserine modification. Phosphothreonine is present on residues threonine 1733 and threonine 1739. Serine 1742 carries the phosphoserine modification.

This sequence belongs to the TRAFAC class myosin-kinesin ATPase superfamily. Myosin family. As to quaternary structure, muscle myosin is a hexameric protein that consists of 2 heavy chain subunits (MHC), 2 alkali light chain subunits (MLC) and 2 regulatory light chain subunits (MLC-2). Interacts with SLC26A5. As to expression, expressed in the cochlea (at protein level). Strongly expressed in spiral ganglion neurons with axonal sprouts and supporting cells around hair cells. In the organ of Corti, it is expressed in inner and outer hair cells, and in supporting cells.

The protein resides in the cytoplasm. The protein localises to the myofibril. Functionally, required for normal hearing. It plays a role in cochlear amplification of auditory stimuli, likely through the positive regulation of prestin (SLC26A5) activity and outer hair cell (OHC) electromotility. The chain is Myosin-1 from Mus musculus (Mouse).